A 248-amino-acid polypeptide reads, in one-letter code: Triosephosphate isomerase (248 aa).

9 to 11 contacts substrate; that stretch reads NWK. Catalysis depends on His94, which acts as the Electrophile. The active-site Proton acceptor is the Glu164. Residues Gly170, Ser209, and 230–231 each bind substrate; that span reads GG.

Belongs to the triosephosphate isomerase family. Homodimer.

It is found in the cytoplasm. The catalysed reaction is D-glyceraldehyde 3-phosphate = dihydroxyacetone phosphate. The protein operates within carbohydrate biosynthesis; gluconeogenesis. It participates in carbohydrate degradation; glycolysis; D-glyceraldehyde 3-phosphate from glycerone phosphate: step 1/1. In terms of biological role, involved in the gluconeogenesis. Catalyzes stereospecifically the conversion of dihydroxyacetone phosphate (DHAP) to D-glyceraldehyde-3-phosphate (G3P). The polypeptide is Triosephosphate isomerase (Hahella chejuensis (strain KCTC 2396)).